We begin with the raw amino-acid sequence, 121 residues long: B-box domain protein 31 (121 aa).

The B box-type; atypical zinc-finger motif lies at 26–72 (SVPVRCELCDGDASVFCEADSAFLCRKCDRWVHGANFLAWRHVRRVL). The PFVFL signature appears at 117-121 (PFVFL).

As to expression, highly expressed in shoot apical meristems and in vascular tissues of leaves. Also detected in petioles.

Functionally, developmental regulator acting by forming heterodimeric complexes, that sequester CO and CO-like (COL) proteins into non-functional complexes. Involved in the CO-mediated long-day flowering-promotion pathway. Engages CO and the transcriptional repressor TPL in a tripartite complex. The polypeptide is B-box domain protein 31 (Arabidopsis thaliana (Mouse-ear cress)).